The following is a 185-amino-acid chain: Ribosome-recycling factor (185 aa).

The protein belongs to the RRF family.

Its subcellular location is the cytoplasm. Responsible for the release of ribosomes from messenger RNA at the termination of protein biosynthesis. May increase the efficiency of translation by recycling ribosomes from one round of translation to another. This chain is Ribosome-recycling factor, found in Nitrosomonas eutropha (strain DSM 101675 / C91 / Nm57).